The sequence spans 857 residues: Cation/H(+) antiporter 25 (857 aa).

11 helical membrane passes run 65–85, 93–110, 122–142, 161–181, 194–214, 227–247, 259–279, 313–333, 385–405, 413–435, and 447–467; these read FSTF…VYVL, RIVC…SMLG, PIAN…FFFL, YIAA…GAAL, SIGG…YTVL, FAMS…VLFE, YSVI…LLVV, FLTD…GLVV, IYMS…AALF, SLTL…LHWI, and VMVL…SFLY. Phosphoserine is present on Ser-855.

Belongs to the monovalent cation:proton antiporter 2 (CPA2) transporter (TC 2.A.37) family. CHX (TC 2.A.37.4) subfamily. Specifically expressed in pollen.

The protein localises to the membrane. May operate as a cation/H(+) antiporter. In Arabidopsis thaliana (Mouse-ear cress), this protein is Cation/H(+) antiporter 25 (CHX25).